We begin with the raw amino-acid sequence, 160 residues long: MASSSVEFRCFVGGLAWATDSNSLEKAFSVYGEIVEAKIVSDRETGRSRGFGFVTFLEEEAMRSAIEAMNGHILDGRNITVNEAQQRGGGGGGGYNRGGGYGGRRDGGGFSRGGGGGYGGGGGGGYGGGRDRGYGGGGGYGGGRDSRGSGGGGSEGGWRN.

Positions 8–86 (FRCFVGGLAW…RNITVNEAQQ (79 aa)) constitute an RRM domain. Positions 82-160 (NEAQQRGGGG…GGGSEGGWRN (79 aa)) are disordered. The segment covering 87–160 (RGGGGGGGYN…GGGSEGGWRN (74 aa)) has biased composition (gly residues). A glycine-rich (GR) required for cell-to-cell movement region spans residues 88–157 (GGGGGGGYNR…GSGGGGSEGG (70 aa)).

Belongs to the GR-RBP family. In terms of assembly, binds to small phloem-mobile single-stranded RNAs (ss-sRNA, e.g. small interfering RNA (siRNA) and microRNA (miRNA)) in the phloeme exudate, including viral-derived sRNA (vsiRNA). As to expression, accumulates in phloem exudates.

The protein localises to the secreted. Its function is as follows. Possibly has a role in RNA transcription or processing during stress. Binds sequence non-specifically to RNAs and DNAs. Mediates cell-to-cell trafficking of RNA interference (RNAi) signals (small RNAs (sRNA), e.g. small interfering RNA (siRNA) and microRNA (miRNA)) which regulate growth and development, as well as responses to environmental inputs, including pathogen attack; can compromise zucchini yellow mosaic virus (ZYMV) and tobacco rattle virus (TRV) infections at the early stage. The sequence is that of Small RNA binding protein 1 from Cucumis sativus (Cucumber).